The primary structure comprises 516 residues: Adenosine deaminase (516 aa).

The signal sequence occupies residues 1–20 (MFPRLIVWLLAASAVHAVLD).

This sequence belongs to the metallo-dependent hydrolases superfamily. Adenosine and AMP deaminases family. ADGF subfamily. Zn(2+) is required as a cofactor. As to expression, salivary gland (at protein level).

Its subcellular location is the secreted. It catalyses the reaction adenosine + H2O + H(+) = inosine + NH4(+). Functionally, catalyzes the deamination of adenosine to inosine. In Phlebotomus duboscqi (Sandfly), this protein is Adenosine deaminase.